The primary structure comprises 310 residues: tRNA dimethylallyltransferase (310 aa).

14–21 (GPTASGKT) is a binding site for ATP. 16–21 (TASGKT) lines the substrate pocket. 3 interaction with substrate tRNA regions span residues 39 to 42 (DSAL), 163 to 167 (QRLSR), and 244 to 249 (RCVGYR).

This sequence belongs to the IPP transferase family. In terms of assembly, monomer. Mg(2+) serves as cofactor.

The catalysed reaction is adenosine(37) in tRNA + dimethylallyl diphosphate = N(6)-dimethylallyladenosine(37) in tRNA + diphosphate. Catalyzes the transfer of a dimethylallyl group onto the adenine at position 37 in tRNAs that read codons beginning with uridine, leading to the formation of N6-(dimethylallyl)adenosine (i(6)A). In Aeromonas salmonicida (strain A449), this protein is tRNA dimethylallyltransferase.